We begin with the raw amino-acid sequence, 203 residues long: GTP-binding protein YPTC1 (203 aa).

Residues 15-23, 33-40, 63-67, 121-124, and 151-153 contribute to the GTP site; these read GDSGVGKSC, YTESYIST, DTAGQ, NKSD, and SAK. The Effector region motif lies at 37–45; the sequence is YISTIGVDF. Residues 174–203 are disordered; that stretch reads ASQPIPTKAGGPVVRPQEGKPINSKSSSCC. 2 S-geranylgeranyl cysteine lipidation sites follow: Cys-202 and Cys-203.

It belongs to the small GTPase superfamily. Rab family.

It is found in the cell membrane. Protein transport. Probably involved in vesicular traffic. This Chlamydomonas reinhardtii (Chlamydomonas smithii) protein is GTP-binding protein YPTC1 (YPTC1).